The following is a 475-amino-acid chain: Putative UDP-glucose glucosyltransferase (475 aa).

This sequence belongs to the UDP-glycosyltransferase family.

This chain is Putative UDP-glucose glucosyltransferase, found in Fragaria ananassa (Strawberry).